The following is a 195-amino-acid chain: Xanthine phosphoribosyltransferase (195 aa).

Xanthine-binding residues include leucine 20 and asparagine 27. A 5-phospho-alpha-D-ribose 1-diphosphate-binding site is contributed by alanine 128 to alanine 132. Lysine 156 serves as a coordination point for xanthine.

Belongs to the purine/pyrimidine phosphoribosyltransferase family. Xpt subfamily. Homodimer.

The protein localises to the cytoplasm. It catalyses the reaction XMP + diphosphate = xanthine + 5-phospho-alpha-D-ribose 1-diphosphate. The protein operates within purine metabolism; XMP biosynthesis via salvage pathway; XMP from xanthine: step 1/1. Its function is as follows. Converts the preformed base xanthine, a product of nucleic acid breakdown, to xanthosine 5'-monophosphate (XMP), so it can be reused for RNA or DNA synthesis. This is Xanthine phosphoribosyltransferase from Limosilactobacillus fermentum (strain NBRC 3956 / LMG 18251) (Lactobacillus fermentum).